Consider the following 303-residue polypeptide: Elongation factor Ts (303 aa).

Residues 79-82 (TDFV) are involved in Mg(2+) ion dislocation from EF-Tu.

It belongs to the EF-Ts family.

Its subcellular location is the cytoplasm. In terms of biological role, associates with the EF-Tu.GDP complex and induces the exchange of GDP to GTP. It remains bound to the aminoacyl-tRNA.EF-Tu.GTP complex up to the GTP hydrolysis stage on the ribosome. The polypeptide is Elongation factor Ts (Syntrophotalea carbinolica (strain DSM 2380 / NBRC 103641 / GraBd1) (Pelobacter carbinolicus)).